A 313-amino-acid polypeptide reads, in one-letter code: Phosphoenolpyruvate phosphomutase (313 aa).

Residues 1-23 (MNATERPGSDGTGSPESVGSRLK) are disordered. Catalysis depends on aspartate 69, which acts as the Nucleophile.

This sequence belongs to the isocitrate lyase/PEP mutase superfamily. PEP mutase family.

The enzyme catalyses phosphoenolpyruvate + H(+) = 3-phosphonopyruvate. It participates in secondary metabolite biosynthesis; bialaphos biosynthesis. Formation of a carbon-phosphorus bond by converting phosphoenolpyruvate (PEP) to phosphonopyruvate (P-Pyr). The polypeptide is Phosphoenolpyruvate phosphomutase (ppm) (Streptomyces viridochromogenes (strain DSM 40736 / JCM 4977 / BCRC 1201 / Tue 494)).